Here is a 976-residue protein sequence, read N- to C-terminus: 5'-3' exoribonuclease 2 homolog (976 aa).

The CCHC-type zinc-finger motif lies at 264 to 281 (RACELCGQYGHELKECRG). Over residues 411–420 (DEERFKENQK) the composition is skewed to basic and acidic residues. The segment at 411–442 (DEERFKENQKNKKARMQQYGRGRGGRGRGRGQ) is disordered. The tract at residues 535–788 (DIRLYESGWK…GICVLYEDPE (254 aa)) is interaction with paxt-1. Residues 815–976 (WNERRDGRFN…GGYQGNSSWR (162 aa)) are disordered. Low complexity predominate over residues 856-866 (DRQGGNDNYRG).

This sequence belongs to the 5'-3' exonuclease family. XRN2/RAT1 subfamily. In terms of assembly, interacts with paxt-1 (via N-terminus); the interaction is direct and results in stabilization of xrn-2 in the complex.

The protein resides in the nucleus. Its function is as follows. Possesses 5'-&gt;3' exoribonuclease activity. Plays a role in maintenance of steady-state concentration and turnover of microRNAs (miRNA) by degradation of mature miRNA. Degradation role is enhanced when in complex with paxt-1. Partially redundant to xrn-1 in miRNA guide strand degradation. Implicated in differential regulation of mRNAs such as let-7 by controlling the accumulation of mature miRNA. Positively regulates molting of the pharyngeal cuticle. This Caenorhabditis briggsae protein is 5'-3' exoribonuclease 2 homolog.